A 286-amino-acid polypeptide reads, in one-letter code: NAD kinase (286 aa).

Asp68 (proton acceptor) is an active-site residue. Residues 68–69, Lys73, 142–143, Arg153, Asp172, 183–188, and Gln242 contribute to the NAD(+) site; these read DG, ND, and TGYSFS.

The protein belongs to the NAD kinase family. A divalent metal cation serves as cofactor.

The protein resides in the cytoplasm. It catalyses the reaction NAD(+) + ATP = ADP + NADP(+) + H(+). Involved in the regulation of the intracellular balance of NAD and NADP, and is a key enzyme in the biosynthesis of NADP. Catalyzes specifically the phosphorylation on 2'-hydroxyl of the adenosine moiety of NAD to yield NADP. This Natranaerobius thermophilus (strain ATCC BAA-1301 / DSM 18059 / JW/NM-WN-LF) protein is NAD kinase.